A 126-amino-acid chain; its full sequence is Small ribosomal subunit protein uS13 (126 aa).

Residues 94–126 (RNLPVHGQRTHTNARTRKGPRRAIAGKKKAGKK) form a disordered region.

This sequence belongs to the universal ribosomal protein uS13 family. As to quaternary structure, part of the 30S ribosomal subunit. Forms a loose heterodimer with protein S19. Forms two bridges to the 50S subunit in the 70S ribosome.

Located at the top of the head of the 30S subunit, it contacts several helices of the 16S rRNA. In the 70S ribosome it contacts the 23S rRNA (bridge B1a) and protein L5 of the 50S subunit (bridge B1b), connecting the 2 subunits; these bridges are implicated in subunit movement. Contacts the tRNAs in the A and P-sites. This is Small ribosomal subunit protein uS13 from Parafrankia sp. (strain EAN1pec).